The sequence spans 155 residues: Ribosomal RNA large subunit methyltransferase H (155 aa).

Residues leucine 73, glycine 104, and 123–128 (LSPLTL) contribute to the S-adenosyl-L-methionine site.

It belongs to the RNA methyltransferase RlmH family. As to quaternary structure, homodimer.

Its subcellular location is the cytoplasm. The enzyme catalyses pseudouridine(1915) in 23S rRNA + S-adenosyl-L-methionine = N(3)-methylpseudouridine(1915) in 23S rRNA + S-adenosyl-L-homocysteine + H(+). Its function is as follows. Specifically methylates the pseudouridine at position 1915 (m3Psi1915) in 23S rRNA. This is Ribosomal RNA large subunit methyltransferase H from Pseudomonas fluorescens (strain ATCC BAA-477 / NRRL B-23932 / Pf-5).